Consider the following 158-residue polypeptide: Sorbin and SH3 domain-containing protein 2 (158 aa).

Positions 1-46 (MRAATPLQTVDRPKDWYKTMFKQIHMVHKPDDDTDMYNTPYTYNAG) constitute a SoHo domain. The segment at 28–158 (HKPDDDTDMY…TKPQAGRRKV (131 aa)) is disordered. The segment covering 50-66 (SPYSAQSHPAAKTQTYR) has biased composition (polar residues). Over residues 71 to 81 (SHSDNGTDAFK) the composition is skewed to basic and acidic residues. Ser73 carries the phosphoserine modification. Residues 86–99 (PVPPPHVPPPVPPL) are compositionally biased toward pro residues. The span at 100–136 (RPRDRSSTEKHDWDPPDRKVDTRKFRSEPRSIFEYEP) shows a compositional bias: basic and acidic residues. Ala153 carries the post-translational modification Alanine amide.

Interacts with ABL1/c-Abl, ABL2/v-Abl/Arg, ACTN, AKT1, CBL, PALLD and PAK1. Interacts with ABL, CBL, DNM1, DNM2, FLOT1, AFDN, PTK2B/PYK2, SAPAP, SPTAN1, SYNJ1, SYNJ2, VCL/vinculin, and WASF. Interacts with PTPN12 and WASF1 via its SH3 domains; this interaction may mediate the partial PTPN12 and WASF1 translocation to focal adhesion sites. In terms of processing, ubiquitinated by CBL. Post-translationally, dephosphorylated by PTPN12. Expressed in duodenum.

The protein localises to the cytoplasm. The protein resides in the perinuclear region. It is found in the apical cell membrane. Its subcellular location is the cell junction. It localises to the focal adhesion. The protein localises to the cell projection. The protein resides in the lamellipodium. Its function is as follows. Adapter protein that plays a role in the assembling of signaling complexes, being a link between ABL kinases and actin cytoskeleton. Can form complex with ABL1 and CBL, thus promoting ubiquitination and degradation of ABL1 or with AKT1 and PAK1, thus mediating AKT1-mediated activation of PAK1. May play a role in the regulation of pancreatic cell adhesion, possibly by acting on WASF1 phosphorylation, enhancing phosphorylation by ABL1, as well as dephosphorylation by PTPN12. Increases water and sodium absorption in the intestine and gall-bladder. The polypeptide is Sorbin and SH3 domain-containing protein 2 (SORBS2) (Sus scrofa (Pig)).